Here is a 399-residue protein sequence, read N- to C-terminus: Endo-1,4-beta-xylanase C (399 aa).

The first 20 residues, 1–20 (MFKFSASLAALAALVPFVAA), serve as a signal peptide directing secretion. Residues 21 to 56 (QSPEWGQCGGIGWTGPTTCVAGTTCVESNPYYSQCL) enclose the CBM1 domain. The 316-residue stretch at 81–396 (SAKLHTLAKA…KPAFNGIAAG (316 aa)) folds into the GH10 domain. E212 functions as the Proton donor in the catalytic mechanism. Residue E318 is the Nucleophile of the active site. A disulfide bridge connects residues C346 and C352.

This sequence belongs to the glycosyl hydrolase 10 (cellulase F) family.

It is found in the secreted. It carries out the reaction Endohydrolysis of (1-&gt;4)-beta-D-xylosidic linkages in xylans.. It participates in glycan degradation; xylan degradation. Its function is as follows. Endo-1,4-beta-xylanase involved in the hydrolysis of xylan, a major structural heterogeneous polysaccharide found in plant biomass representing the second most abundant polysaccharide in the biosphere, after cellulose. In Phanerodontia chrysosporium (White-rot fungus), this protein is Endo-1,4-beta-xylanase C (xynC).